The following is a 732-amino-acid chain: Iron-sulfur clusters transporter ATM1, mitochondrial (732 aa).

Residues 1 to 55 constitute a mitochondrion transit peptide; sequence MGFGSCSRHALFTPAAFSGSFTTMTTSCFKRVYTAQIHGGDALGKRLPSVSSFSG. Over 56–143 the chain is Mitochondrial matrix; it reads QLPRHGLHRQ…KNNPNVKFRV (88 aa). Residues 71–114 are disordered; that stretch reads STSHRRQTSPPPSPRTTSQSPTVPSKASTTPPTSLNTSKPIATE. A compositionally biased stretch (low complexity) spans 85 to 95; sequence RTTSQSPTVPS. The span at 96–114 shows a compositional bias: polar residues; the sequence is KASTTPPTSLNTSKPIATE. Residues 144–164 traverse the membrane as a helical segment; sequence IGALTLLVAGKVLNVQVPFFF. One can recognise an ABC transmembrane type-1 domain in the interval 144 to 432; the sequence is IGALTLLVAG…LGTVYRELRQ (289 aa). Over 165–181 the chain is Mitochondrial intermembrane; that stretch reads KTIVDSLNVPITESTTV. Residues 182–202 traverse the membrane as a helical segment; that stretch reads WVLAGASIAGYGAARILTTLF. The Mitochondrial matrix segment spans residues 203–262; that stretch reads GELRNAVFASVAQNAIRKVARETFEHLLNMDMKFHLERQTGGLTRAIDRGTKGISFILSS. Residues 263-283 form a helical membrane-spanning segment; sequence IVFHVIPTALEISMVCGILSW. Residue Lys-284 is a topological domain, mitochondrial intermembrane. The chain crosses the membrane as a helical span at residues 285-305; the sequence is FGWDFAAVTAITMLLYTWFTI. Residues 306–378 lie on the Mitochondrial matrix side of the membrane; it reads KTTAWRTTFR…SLAALNSGQN (73 aa). Glutathione is bound by residues 311–315 and 374–377; these read RTTFR and NSGQ. A helical membrane pass occupies residues 379–399; sequence FIFSSALTMMMLLGAQGIVKG. Residues 400 to 405 are Mitochondrial intermembrane-facing; it reads TMTVGD. A helical membrane pass occupies residues 406 to 426; it reads LVLVNQLVFQLSLPLNFLGTV. Gly-424 is a binding site for glutathione. The Mitochondrial matrix segment spans residues 427–732; sequence YRELRQSLID…LEVVDEKKKQ (306 aa). The 237-residue stretch at 466 to 702 folds into the ABC transporter domain; the sequence is IEFRNVAFAY…PGGVYHRLWQ (237 aa). ATP is bound by residues Tyr-475 and 499–506; that span reads GPSGCGKS. Positions 708–732 are disordered; that stretch reads STQPTDEEIERQREELEVVDEKKKQ. Positions 717–732 are enriched in basic and acidic residues; the sequence is ERQREELEVVDEKKKQ.

This sequence belongs to the ABC transporter superfamily. ABCB family. Heavy Metal importer (TC 3.A.1.210) subfamily. In terms of assembly, homodimer.

The protein localises to the mitochondrion inner membrane. Performs an essential function in the generation of cytoplasmic iron-sulfur proteins by mediating the ATP-dependent export of mitochondrial Fe/S cluster precursors synthesized by NFS1 and other mitochondrial proteins. Hydrolyzes ATP. Binds glutathione and may function by transporting a glutathione-conjugated iron-sulfur compound. Plays a role during copper stress, in a manner dependent on the copper metalloregulatory transcription factor CUF1. This is Iron-sulfur clusters transporter ATM1, mitochondrial from Cryptococcus neoformans var. grubii serotype A (strain H99 / ATCC 208821 / CBS 10515 / FGSC 9487) (Filobasidiella neoformans var. grubii).